A 172-amino-acid polypeptide reads, in one-letter code: Large ribosomal subunit protein uL10 (172 aa).

Belongs to the universal ribosomal protein uL10 family. In terms of assembly, part of the ribosomal stalk of the 50S ribosomal subunit. The N-terminus interacts with L11 and the large rRNA to form the base of the stalk. The C-terminus forms an elongated spine to which 3 L12 dimers bind in a sequential fashion forming a heptameric L10(L12)2(L12)2(L12)2 complex.

Functionally, forms part of the ribosomal stalk, playing a central role in the interaction of the ribosome with GTP-bound translation factors. This Agrobacterium fabrum (strain C58 / ATCC 33970) (Agrobacterium tumefaciens (strain C58)) protein is Large ribosomal subunit protein uL10.